A 63-amino-acid chain; its full sequence is Beta-defensin 4 (63 aa).

An N-terminal signal peptide occupies residues 1-22 (MRLHHLLLAVLFLVLSAGSGFT). Glutamine 23 is modified (pyrrolidone carboxylic acid). 3 disulfide bridges follow: cysteine 31–cysteine 60, cysteine 38–cysteine 53, and cysteine 43–cysteine 61.

The protein belongs to the beta-defensin family. Neutrophilic granules.

It is found in the secreted. Its function is as follows. Has bactericidal activity. Active against E.coli ML35 and S.aureus 502A. This chain is Beta-defensin 4 (DEFB4), found in Bos taurus (Bovine).